The following is a 629-amino-acid chain: tRNA uridine 5-carboxymethylaminomethyl modification enzyme MnmG (629 aa).

FAD-binding positions include 14–19 (GAGHAG), valine 126, and serine 181. Residue 273–287 (GPRYCPSIEDKVVRF) coordinates NAD(+). Glutamine 370 is an FAD binding site.

The protein belongs to the MnmG family. Homodimer. Heterotetramer of two MnmE and two MnmG subunits. It depends on FAD as a cofactor.

It is found in the cytoplasm. NAD-binding protein involved in the addition of a carboxymethylaminomethyl (cmnm) group at the wobble position (U34) of certain tRNAs, forming tRNA-cmnm(5)s(2)U34. In Bacillus cereus (strain ATCC 10987 / NRS 248), this protein is tRNA uridine 5-carboxymethylaminomethyl modification enzyme MnmG.